Reading from the N-terminus, the 300-residue chain is MSIKSGFVALAGKPNVGKSTFINAVMGRKVVIVSDKPQTTRNRINCIYTDKDSQIIFVDTPGIHKPLHRLGEYMVKAAVQALKGVDLVLFMLDAADGFTKTDEHVAKIVNDSGTKTIIAVNKIDVAGEEKAKAVGELAKSMVENVVSVHYISALKGEGVFEVLEKIKEELPEGPQYYPEDMVTDRPLSFMAAEIIREKIFHLTRQEVPHSTAVVIEEIKDRPNGVLYIRANIYVERDSQKGILIGKNGSMIKKIGTLAREELEFLVGRKVYLDLNVKVKEKWREKDFIILQEIGLKDDIK.

The 169-residue stretch at 4–172 (KSGFVALAGK…LEKIKEELPE (169 aa)) folds into the Era-type G domain. The segment at 12–19 (GKPNVGKS) is G1. 12–19 (GKPNVGKS) lines the GTP pocket. Residues 38–42 (QTTRN) are G2. The interval 59-62 (DTPG) is G3. GTP is bound by residues 59-63 (DTPGI) and 121-124 (NKID). Residues 121 to 124 (NKID) are G4. Residues 151–153 (ISA) are G5. The KH type-2 domain occupies 195 to 280 (IREKIFHLTR…YLDLNVKVKE (86 aa)).

It belongs to the TRAFAC class TrmE-Era-EngA-EngB-Septin-like GTPase superfamily. Era GTPase family. As to quaternary structure, monomer.

Its subcellular location is the cytoplasm. The protein resides in the cell inner membrane. Functionally, an essential GTPase that binds both GDP and GTP, with rapid nucleotide exchange. Plays a role in 16S rRNA processing and 30S ribosomal subunit biogenesis and possibly also in cell cycle regulation and energy metabolism. In Thermotoga maritima (strain ATCC 43589 / DSM 3109 / JCM 10099 / NBRC 100826 / MSB8), this protein is GTPase Era.